A 64-amino-acid polypeptide reads, in one-letter code: Large ribosomal subunit protein uL30 (64 aa).

The protein belongs to the universal ribosomal protein uL30 family. As to quaternary structure, part of the 50S ribosomal subunit.

This is Large ribosomal subunit protein uL30 from Bradyrhizobium diazoefficiens (strain JCM 10833 / BCRC 13528 / IAM 13628 / NBRC 14792 / USDA 110).